We begin with the raw amino-acid sequence, 364 residues long: Dual-specificity RNA methyltransferase RlmN (364 aa).

The Proton acceptor role is filled by E91. The 237-residue stretch at 97-333 folds into the Radical SAM core domain; that stretch reads EDDRGTLCVS…VTVRKTRGDD (237 aa). C104 and C338 are disulfide-bonded. C111, C115, and C118 together coordinate [4Fe-4S] cluster. S-adenosyl-L-methionine-binding positions include 164–165, S196, 218–220, and N295; these read GE and SLH. C338 functions as the S-methylcysteine intermediate in the catalytic mechanism.

This sequence belongs to the radical SAM superfamily. RlmN family. The cofactor is [4Fe-4S] cluster.

The protein localises to the cytoplasm. It carries out the reaction adenosine(2503) in 23S rRNA + 2 reduced [2Fe-2S]-[ferredoxin] + 2 S-adenosyl-L-methionine = 2-methyladenosine(2503) in 23S rRNA + 5'-deoxyadenosine + L-methionine + 2 oxidized [2Fe-2S]-[ferredoxin] + S-adenosyl-L-homocysteine. It catalyses the reaction adenosine(37) in tRNA + 2 reduced [2Fe-2S]-[ferredoxin] + 2 S-adenosyl-L-methionine = 2-methyladenosine(37) in tRNA + 5'-deoxyadenosine + L-methionine + 2 oxidized [2Fe-2S]-[ferredoxin] + S-adenosyl-L-homocysteine. Its function is as follows. Specifically methylates position 2 of adenine 2503 in 23S rRNA and position 2 of adenine 37 in tRNAs. m2A2503 modification seems to play a crucial role in the proofreading step occurring at the peptidyl transferase center and thus would serve to optimize ribosomal fidelity. The polypeptide is Dual-specificity RNA methyltransferase RlmN (Chromobacterium violaceum (strain ATCC 12472 / DSM 30191 / JCM 1249 / CCUG 213 / NBRC 12614 / NCIMB 9131 / NCTC 9757 / MK)).